The following is a 249-amino-acid chain: Exosome complex component Rrp4 (249 aa).

The S1 motif domain maps to 72 to 143 (GDTIIGLVED…RTISPVLTVK (72 aa)). In terms of domain architecture, KH spans 151 to 213 (PLGTVMDIMP…EALIEAINII (63 aa)).

Belongs to the RRP4 family. In terms of assembly, component of the archaeal exosome complex. Forms a trimer of Rrp4 and/or Csl4 subunits. The trimer associates with a hexameric ring-like arrangement composed of 3 Rrp41-Rrp42 heterodimers.

Its subcellular location is the cytoplasm. Non-catalytic component of the exosome, which is a complex involved in RNA degradation. Increases the RNA binding and the efficiency of RNA degradation. Confers strong poly(A) specificity to the exosome. The polypeptide is Exosome complex component Rrp4 (Sulfolobus acidocaldarius (strain ATCC 33909 / DSM 639 / JCM 8929 / NBRC 15157 / NCIMB 11770)).